Consider the following 731-residue polypeptide: Actin filament-associated protein 1 (731 aa).

Residue Met-1 is modified to N-acetylmethionine. Positions 56–90 (NNLPAPPQMPLPEIPQPWLPPDSGPPPLPTSSLPE) are disordered. Pro residues predominate over residues 59–84 (PAPPQMPLPEIPQPWLPPDSGPPPLP). An SH3-binding motif is present at residues 70–73 (PQPW). Residues 93 to 96 (YEEA) carry the SH2-binding 1 motif. Residues 118 to 139 (SSSYESYDEEEEDGKGKKTRHQ) are disordered. Residues 152–248 (DAKICAFLLR…WLKVIKEAYS (97 aa)) form the PH 1 domain. The disordered stretch occupies residues 252–318 (GPVDPECSPP…SKSEAKGTVS (67 aa)). The segment covering 271-284 (AELEKKLSSERPSS) has biased composition (basic and acidic residues). Ser-283 and Ser-284 each carry phosphoserine. In terms of domain architecture, PH 2 spans 348–442 (DVPTCGYLNV…WIGILLAETG (95 aa)). Residues 452–457 (YDYIDV) carry the SH2-binding 2 motif. The tract at residues 513–544 (KNKKPPASSNGVPVKGKAPSSQQKKVETAGGV) is disordered. A Phosphoserine modification is found at Ser-549. Residues 558–649 (KNRVEADAKR…VKESLKKALA (92 aa)) adopt a coiled-coil conformation. The interval 595-638 (DLRAAIEVNAGRKTQAALEDKLKRLEEECKQREAERVSLELELT) is interaction with F-actin. Residues 658–731 (IEPRSGTSSP…AKEWELKNGT (74 aa)) are disordered. Ser-665, Ser-666, and Ser-669 each carry phosphoserine. At Thr-676 the chain carries Phosphothreonine. The span at 678 to 687 (ENSPISSCDT) shows a compositional bias: polar residues. A phosphoserine mark is found at Ser-680 and Ser-688. Residues 721–731 (KAKEWELKNGT) are compositionally biased toward basic and acidic residues.

Monomer and homomultimer. Interacts via its C-terminus with F-actin; probably involving AFAP1 multimers. Interacts with activated SRC SH3-SH2 domains. Interacts via its PH 1 domain with PRKCA, PRKCB and PRKCI. In terms of processing, phosphorylated on tyrosine residues by SRC.

The protein resides in the cytoplasm. It is found in the cytoskeleton. The protein localises to the stress fiber. Can cross-link actin filaments into both network and bundle structures. May modulate changes in actin filament integrity and induce lamellipodia formation. May function as an adapter molecule that links other proteins, such as SRC and PKC to the actin cytoskeleton. In Mus musculus (Mouse), this protein is Actin filament-associated protein 1 (Afap1).